The sequence spans 353 residues: Glutamine synthetase cytosolic isozyme 1-5 (353 aa).

At threonine 2 the chain carries N-acetylthreonine. Residue serine 3 is modified to Phosphoserine. The 81-residue stretch at 19 to 99 folds into the GS beta-grasp domain; it reads IIAEYIWIGG…VMCDAYRPAG (81 aa). A GS catalytic domain is found at 106–353; the sequence is NRHKAVKIFD…TSMIAETTIL (248 aa).

This sequence belongs to the glutamine synthetase family. In terms of assembly, homooctamer. In terms of tissue distribution, not expressed in roots.

The protein localises to the cytoplasm. The enzyme catalyses L-glutamate + NH4(+) + ATP = L-glutamine + ADP + phosphate + H(+). In Arabidopsis thaliana (Mouse-ear cress), this protein is Glutamine synthetase cytosolic isozyme 1-5 (GLN1-5).